The chain runs to 101 residues: Ubiquitin-related modifier 1 homolog (101 aa).

Gly-101 bears the 1-thioglycine mark. Gly-101 participates in a covalent cross-link: Glycyl lysine isopeptide (Gly-Lys) (interchain with K-? in acceptor proteins).

The protein belongs to the URM1 family. Interacts with cer. C-terminal thiocarboxylation occurs in 2 steps, it is first acyl-adenylated (-COAMP) via the hesA/moeB/thiF part of the MOCS3 homolog, then thiocarboxylated (-COSH) via the rhodanese domain of the MOCS3 homolog.

It is found in the cytoplasm. It participates in tRNA modification; 5-methoxycarbonylmethyl-2-thiouridine-tRNA biosynthesis. Acts as a sulfur carrier required for 2-thiolation of mcm(5)S(2)U at tRNA wobble positions of cytosolic tRNA(Lys), tRNA(Glu) and tRNA(Gln). Serves as sulfur donor in tRNA 2-thiolation reaction by being thiocarboxylated (-COSH) at its C-terminus by MOCS3. The sulfur is then transferred to tRNA to form 2-thiolation of mcm(5)S(2)U. Also acts as a ubiquitin-like protein (UBL) that is covalently conjugated via an isopeptide bond to lysine residues of target proteins such as Prx2/Jafrac1, Ciao1, Eip71CD and GILT1. The thiocarboxylated form serves as substrate for conjugation and oxidative stress specifically induces the formation of UBL-protein conjugates. This chain is Ubiquitin-related modifier 1 homolog, found in Drosophila ananassae (Fruit fly).